The sequence spans 491 residues: MGAYLNKPIIEKEKEEGSGNGLSYACTTMQGWRVNQEDAHNCVVDLHTDWHMFGVYDGHGGTEVSKFTSAKLPDFLKERKFWEADDVAECLQKAFVDFDDFIRAEESMKELKDIGDEGKPKKAGGEADSEDEADRIDTIEEASVPLAELLKRYGGAGVGKSLLSAFLAKGDVSDDSEDEDEDEEEAEEQDDTEEKKENEDASAEVVIENAEDKEEEEGSPKKKGQKRCQKSPIQSEAKKSKSETDAETAPSSSSGVDGVATEEEDEDDSDKEFVADEEEDDEDAEDEQSDEEMVDGSLAPLLLGSGGAEVPGEDSGTTACVCLVGKDKVIVANAGDSRAVLCRNGKAVDLSVDHKPEDEVETNRIHAAGGQIEDGRVNGGLNLSRAFGDHAYKKNQELGLKEQMITALPDVKIEALTPEDEFIVVACDGIWNSMESQQVVDFVRDLLAKGSSCAEVCDALCDACLADSTDGDGTGCDNMTVICTTFDRKSK.

The region spanning 23–486 is the PPM-type phosphatase domain; that stretch reads SYACTTMQGW…DNMTVICTTF (464 aa). Aspartate 57 and glycine 58 together coordinate Mn(2+). A compositionally biased stretch (basic and acidic residues) spans 112 to 125; sequence KDIGDEGKPKKAGG. Disordered regions lie at residues 112-136 and 170-294; these read KDIGDEGKPKKAGGEADSEDEADRI and GDVS…EEMV. 2 stretches are compositionally biased toward acidic residues: residues 173–192 and 260–294; these read SDDSEDEDEDEEEAEEQDDT and ATEEEDEDDSDKEFVADEEEDDEDAEDEQSDEEMV. Residues aspartate 428 and aspartate 477 each contribute to the Mn(2+) site.

The protein belongs to the PP2C family. Mg(2+) serves as cofactor. It depends on Mn(2+) as a cofactor.

It catalyses the reaction O-phospho-L-seryl-[protein] + H2O = L-seryl-[protein] + phosphate. The enzyme catalyses O-phospho-L-threonyl-[protein] + H2O = L-threonyl-[protein] + phosphate. The polypeptide is Protein phosphatase ppm-1.G (Caenorhabditis elegans).